The following is a 267-amino-acid chain: UPF0162 protein HI_1558 (267 aa).

The protein belongs to the UPF0162 family.

The chain is UPF0162 protein HI_1558 from Haemophilus influenzae (strain ATCC 51907 / DSM 11121 / KW20 / Rd).